Reading from the N-terminus, the 62-residue chain is Bacteriocin pediocin PA-1 (62 aa).

A propeptide spanning residues 1-18 (MKKIEKLTEKEMANIIGG) is cleaved from the precursor. Cystine bridges form between Cys27-Cys32 and Cys42-Cys62. Residues 40 to 52 (TTCIINNGAMAWA) are hydrophobic.

Belongs to the bacteriocin class IIA/YGNGV family.

It is found in the secreted. In terms of biological role, bactericidal activity (effective inhibitor of L.monocytogenes). In Pediococcus acidilactici, this protein is Bacteriocin pediocin PA-1 (pedA).